A 196-amino-acid chain; its full sequence is MLFRYLVWLFRFIEVKNVASISLLVIGSIYLTTAISNNISTTISPTTSSNSLTTAISNNTSTTISPTTTSSNYLTSAISTNISDKEEDTPFSTDKTVFDGLSPITLYRAIRSTLNDTMTDILTRPYRPTTVIFHSDTPQPVKNATQGNIIKKTYRQVLTFFIQPNPLFPCFKNHEVFLNLANILNTILCIILIKNV.

Repeat copies occupy residues 28-48 and 49-70. A 3; approximate repeat occupies 71–92; it reads SNYLTSAISTNISDKEEDTPFS.

It belongs to the asfivirus I196L family.

This African swine fever virus (isolate Warthog/Namibia/Wart80/1980) (ASFV) protein is Late protein I196L.